Consider the following 446-residue polypeptide: Transcription factor Dp-2 (446 aa).

Threonine 2 bears the N-acetylthreonine mark. Serine 24 and serine 42 each carry phosphoserine; by CDK2. The tract at residues 60 to 82 (PQMIISTPQRIANSGSVLIGNPY) is interaction with CEBPA. The short motif at 103-118 (SDRKRAREFIDSDFSE) is the Nuclear localization signal element. A Phosphoserine modification is found at serine 122. The DNA-binding element occupies 129–210 (GKGLRHFSMK…PTGKKRNQVD (82 aa)). Residues 176 to 210 (DQENIRRRVYDALNVLMAMNIISSLPTGKKRNQVD) carry the DEF box motif. The dimerization stretch occupies residues 219-292 (NLEIEKQRRI…RKTVIDCSIS (74 aa)). Positions 229 to 261 (ERIKQKRAQLQELLLQQIAFKNLVQRNRQNEQQ) are DCB1. The DCB2 stretch occupies residues 274-330 (LPFIIINTSRKTVIDCSISSDKFEYLFNFDNTFEIHDDIEVLKRMGMSFGLESGKCS). The interval 404 to 446 (LPASNSHQSSSAASHFSESRGETPCSFNDEDEEDEEEDPSSPE) is disordered. The span at 406-419 (ASNSHQSSSAASHF) shows a compositional bias: low complexity. Acidic residues predominate over residues 431–446 (NDEDEEDEEEDPSSPE).

It belongs to the E2F/DP family. Component of the DRTF1/E2F transcription factor complex. Forms heterodimers with E2F family members. The complex can interact with hypophosphorylated retinoblastoma protein RB1 and related proteins (RBL1 and RBL2) that inhibit the E2F transactivation domain. During the cell cycle, RB becomes phosphorylated in mid-to-late G1 phase, detaches from the DRTF1/E2F complex rendering E2F transcriptionally active. Interacts with GMCL. Component of the DREAM complex (also named LINC complex) at least composed of E2F4, E2F5, LIN9, LIN37, LIN52, LIN54, MYBL1, MYBL2, RBL1, RBL2, RBBP4, TFDP1 and TFDP2. The complex exists in quiescent cells where it represses cell cycle-dependent genes. It dissociates in S phase when LIN9, LIN37, LIN52 and LIN54 form a subcomplex that binds to MYBL2. The complex TFDP2:E2F1 interacts with CEBPA; the interaction prevents CEBPA binding to target gene promoters and represses its transcriptional activity. Post-translationally, phosphorylation by E2F1-bound cyclin A-CDK2, in the S phase, inhibits E2F-mediated DNA binding and transactivation. As to expression, expressed in all tissues examined. Highest levels in spleen and heart.

Its subcellular location is the nucleus. Functionally, can stimulate E2F-dependent transcription. Binds DNA cooperatively with E2F family members through the E2 recognition site, 5'-TTTC[CG]CGC-3', found in the promoter region of a number of genes whose products are involved in cell cycle regulation or in DNA replication. The TFDP2:E2F complex functions in the control of cell-cycle progression from G1 to S phase. The E2F1:DP complex appears to mediate both cell proliferation and apoptosis. Blocks adipocyte differentiation by repressing CEBPA binding to its target gene promoters. The polypeptide is Transcription factor Dp-2 (Tfdp2) (Mus musculus (Mouse)).